A 709-amino-acid polypeptide reads, in one-letter code: Molybdenum cofactor sulfurase (709 aa).

Position 208 is an N6-(pyridoxal phosphate)lysine (Lys208). The active site involves Cys367. An MOSC domain is found at Asp563–Ser707.

It belongs to the class-V pyridoxal-phosphate-dependent aminotransferase family. MOCOS subfamily. Pyridoxal 5'-phosphate is required as a cofactor.

It carries out the reaction Mo-molybdopterin + L-cysteine + AH2 = thio-Mo-molybdopterin + L-alanine + A + H2O. It participates in cofactor biosynthesis; molybdopterin biosynthesis. Sulfurates the molybdenum cofactor. Sulfation of molybdenum is essential for xanthine dehydrogenase (XDH) and aldehyde oxidase (ADO) enzymes in which molybdenum cofactor is liganded by 1 oxygen and 1 sulfur atom in active form. The sequence is that of Molybdenum cofactor sulfurase from Caenorhabditis elegans.